A 179-amino-acid polypeptide reads, in one-letter code: Large ribosomal subunit protein uL5 (179 aa).

This sequence belongs to the universal ribosomal protein uL5 family. In terms of assembly, part of the 50S ribosomal subunit; part of the 5S rRNA/L5/L18/L25 subcomplex. Contacts the 5S rRNA and the P site tRNA. Forms a bridge to the 30S subunit in the 70S ribosome.

This is one of the proteins that bind and probably mediate the attachment of the 5S RNA into the large ribosomal subunit, where it forms part of the central protuberance. In the 70S ribosome it contacts protein S13 of the 30S subunit (bridge B1b), connecting the 2 subunits; this bridge is implicated in subunit movement. Contacts the P site tRNA; the 5S rRNA and some of its associated proteins might help stabilize positioning of ribosome-bound tRNAs. This chain is Large ribosomal subunit protein uL5, found in Rickettsia bellii (strain OSU 85-389).